Here is an 859-residue protein sequence, read N- to C-terminus: Fanconi anemia group B protein (859 aa).

At T2 the chain carries N-acetylthreonine.

As to quaternary structure, belongs to the multisubunit FA complex composed of FANCA, FANCB, FANCC, FANCE, FANCF, FANCG, FANCL/PHF9 and FANCM. The complex is not found in FA patients.

It localises to the nucleus. In terms of biological role, DNA repair protein required for FANCD2 ubiquitination. The protein is Fanconi anemia group B protein (FANCB) of Homo sapiens (Human).